A 143-amino-acid polypeptide reads, in one-letter code: uncharacterized protein (143 aa).

A helical transmembrane segment spans residues 4–24 (FGIVALSIICSIAFLFVAYGV). Positions 97–143 (TVPFVNTEAPPPRLSSSFSRQSGENAETQSQVSASPFNDKNSPYVQE) are disordered. A compositionally biased stretch (polar residues) spans 110 to 143 (LSSSFSRQSGENAETQSQVSASPFNDKNSPYVQE).

It localises to the golgi apparatus membrane. This is an uncharacterized protein from Schizosaccharomyces pombe (strain 972 / ATCC 24843) (Fission yeast).